We begin with the raw amino-acid sequence, 341 residues long: MATIKDVAKRAGVSTTTVSHVINKTRFVAEETKAAVRAAIKELHYSPSAVARSLKVNHTKSIGLLATSSEAPYFAEIIEAVENSCYAKGYTLVLCNSHNDIGKQRAYLSMLAQKRVDGLLVMCAEYPPELLAMLKDYRSIPMVVMDWGQMHSDFTDTIIDNAFEGGYMAGRYLIERGHRDIGAIPGIQERNTGSGRYLGFLKALKEADITVREEWVVQGDFEPESGYKAMHQILAQKQRPTAVFCGGDIMAMGAICAADELGLRVPQDISVIGYDNVRHARFFTPALTTIHQPKERLGQSAFAMLLDRITSKREDAHVIEVHPTLIERRSVADGPYLDYRR.

Positions 2 to 56 constitute an HTH lacI-type domain; it reads ATIKDVAKRAGVSTTTVSHVINKTRFVAEETKAAVRAAIKELHYSPSAVARSLKV. Residues 4–23 constitute a DNA-binding region (H-T-H motif); that stretch reads IKDVAKRAGVSTTTVSHVIN. The DNA-binding element occupies 48–56; sequence SAVARSLKV. Positions 73, 190, 192, 221, and 275 each coordinate hypoxanthine.

In terms of assembly, homodimer.

The protein operates within purine metabolism; purine nucleotide biosynthesis [regulation]. Functionally, is the main repressor of the genes involved in the de novo synthesis of purine nucleotides, regulating purB, purC, purEK, purF, purHD, purL, purMN and guaBA expression. PurR is allosterically activated to bind its cognate DNA by binding the purine corepressors, hypoxanthine or guanine, thereby effecting transcription repression. This chain is HTH-type transcriptional repressor PurR, found in Pectobacterium carotovorum subsp. carotovorum (strain PC1).